A 953-amino-acid chain; its full sequence is MADYKSTLNLPYTQFPMRGNLPIIEIKILERWNRDNLYEIIRRKKNEKKLFLLHDGPPYANGFIHLGHAVNKILKDIIIKFKGLSGYDAPYIPGWDCHGLPIELQVEKLIKKVNMDIDINSQEFRNYCREYVKKQIEIQKKDFIRLGILGEWKNPYLTMDYKTEANIIRTLGKIISNGYFYKGIKPVYWCFQCHSALANSEVEYNDYHYSNAVDVGFSIVENVSINKIFNINCYIENIELVIWTTTIWTLPANQAISIHPDYIYQLVKILDNEKYLIIAANLVNMFMNRIKCTMWQVLGEVLGSKLDRLTARHPFMNFNVPLVLSKHIKLDSGTGLVHIAPDHGPDDYLISKKYKFKNRDSLIDSNGYYLSNSHNRLCGLHIFNANEIIIDLLYKSKNFLYFNANYQHSYPYCWRHKIPLIFRTTSQWFVNMDHNNLRDKLLRTLQQVRWIPDSGYSSMQSMIVNRPDWCLSRQRVWGIPIPVFVHKKTEVLHPNTCIFIEQVAQLVEKYGIQIWWDLKNEDIILNKAESMNYQKIYDTLDVWFDSGSTHDSVILDRFNSKLKSKLQIDLYLEGVDQYRGWFMSSLIIAVAIKGYAPYKQVLSHGFTIDDKGNKMSKSLGNIIRPLDIVNKFGSDILRLWVASSDYSKDMVISDDVLKNVTDIYRRIRNTIRFFLANINDFDPEKDLVQSNRMVALDQWAINHTLSVQVKIISNYEQYKFHNVIRYIMKFCSIEMGSFYLDVVKDRLYTLNKDSLARRSCQTALYHIIESMVRWIAPILSFTADEIWKYIPGNRSKYVFTEEWYDRLFKIDENQIVNSNYWNFFLNIRNKVNKVIEQERVNGIIKGSLEADVILYVTPILKKKLRILKNELAFGLIVSSVMVLSIDDVDFNTIKENHEENSDELKVVLKKSHGIKCLRCWNYTLSMSKNENYLNICSRCVHNITGLGEDRRFF.

Residues 58–68 carry the 'HIGH' region motif; the sequence is PYANGFIHLGH. Glu573 lines the L-isoleucyl-5'-AMP pocket. A 'KMSKS' region motif is present at residues 614–618; it reads KMSKS. Position 617 (Lys617) interacts with ATP. 4 residues coordinate Zn(2+): Cys916, Cys919, Cys936, and Cys939.

It belongs to the class-I aminoacyl-tRNA synthetase family. IleS type 1 subfamily. Monomer. It depends on Zn(2+) as a cofactor.

Its subcellular location is the cytoplasm. It catalyses the reaction tRNA(Ile) + L-isoleucine + ATP = L-isoleucyl-tRNA(Ile) + AMP + diphosphate. Functionally, catalyzes the attachment of isoleucine to tRNA(Ile). As IleRS can inadvertently accommodate and process structurally similar amino acids such as valine, to avoid such errors it has two additional distinct tRNA(Ile)-dependent editing activities. One activity is designated as 'pretransfer' editing and involves the hydrolysis of activated Val-AMP. The other activity is designated 'posttransfer' editing and involves deacylation of mischarged Val-tRNA(Ile). The protein is Isoleucine--tRNA ligase of Blochmanniella floridana.